We begin with the raw amino-acid sequence, 475 residues long: MTQSVVVQVGQCGNQIGCCFWDLALREHAAVNQKGIYDDAISSFFRNVDTRAVGDGGSISKGRISSLKARAVLIDMEEGVVNEILQGPLRDVFDSKQLITDISGSGNNWAVGHKVFGCLYREQILEKLRKSAEQCDCLQCFFIIHSMGGGTGSGLGTFLLKVLEDEFPEVYRFVTAVYPSSEDDVITSPYNSMLAMKELNEHADCVLPIDNQSLFDIISKIDLVVNSGKLGSAVKPKSLITSNMGAVKKHHKKPFDAMNNIVANLLLSLTSSARFEGSLNMDLNEISMNLVPFPKLHYLVSSLTPLYTLADVNIPPRRLDQMFSDAFSKDHQLIQADPRHSLYLACALIVRGNVQISDLRRNIERLKPALQFVSWNQEGWKTSLCSVPPVGHSHSLLALANNTCVKPTFMELRERFTRLYKKKAHLHHYLQVDGMEESTFTEAVSSLSALIQEYSDLDATKSLPVPDVPRLSVAL.

148-154 serves as a coordination point for GTP; sequence GGGTGSG.

It belongs to the tubulin family. As to quaternary structure, found in a complex with TEDC1, TEDC2, TUBE1 and TUBD1.

It localises to the cytoplasm. It is found in the cytoskeleton. The protein localises to the microtubule organizing center. Its subcellular location is the centrosome. This Mus musculus (Mouse) protein is Tubulin epsilon chain (Tube1).